The following is a 205-amino-acid chain: dITP/XTP pyrophosphatase (205 aa).

11–16 contacts substrate; that stretch reads TKNMGK. Residues glutamate 44 and aspartate 73 each contribute to the Mg(2+) site. The active-site Proton acceptor is the aspartate 73. Residues serine 74, 158 to 161, lysine 181, and 186 to 187 contribute to the substrate site; these read FGYD and HR.

The protein belongs to the HAM1 NTPase family. As to quaternary structure, homodimer. Mg(2+) serves as cofactor.

The catalysed reaction is XTP + H2O = XMP + diphosphate + H(+). The enzyme catalyses dITP + H2O = dIMP + diphosphate + H(+). It catalyses the reaction ITP + H2O = IMP + diphosphate + H(+). In terms of biological role, pyrophosphatase that catalyzes the hydrolysis of nucleoside triphosphates to their monophosphate derivatives, with a high preference for the non-canonical purine nucleotides XTP (xanthosine triphosphate), dITP (deoxyinosine triphosphate) and ITP. Seems to function as a house-cleaning enzyme that removes non-canonical purine nucleotides from the nucleotide pool, thus preventing their incorporation into DNA/RNA and avoiding chromosomal lesions. The protein is dITP/XTP pyrophosphatase of Bacillus thuringiensis subsp. konkukian (strain 97-27).